The chain runs to 602 residues: GTP-binding protein 2 (602 aa).

A disordered region spans residues 16-64 (GGGPAVGGTLKARGAGSSSGCGGPKGKKKNGRNRGGKANNPPYLPPEAE). Positions 40–50 (KGKKKNGRNRG) are enriched in basic residues. Residues 170–398 (FLDLRVAVLG…LNILPPLTNS (229 aa)) enclose the tr-type G domain. GTP is bound by residues 179–186 (GNVDSGKS), 260–264 (DLAGH), and 316–319 (SKID).

The protein belongs to the TRAFAC class translation factor GTPase superfamily. Classic translation factor GTPase family. GTPBP1 subfamily. In terms of tissue distribution, predominantly expressed in thymus, spleen, and testis. Expressed at lower levels in brain, lung, kidney, and ovary.

The protein is GTP-binding protein 2 of Homo sapiens (Human).